The primary structure comprises 419 residues: Odorant receptor 56a (419 aa).

Over 1 to 41 (MFKVKDLLLSPTTFEDPIFGTHLRYFQWYGYVASKDQNRPL) the chain is Cytoplasmic. The helical transmembrane segment at 42-62 (LSLIRCTILTASIWLSCALML) threads the bilayer. Residues 63–76 (ARVFRGYENLNDGA) are Extracellular-facing. Residues 77–97 (TSYATAVQYFAVSIAMFNAYV) traverse the membrane as a helical segment. Topologically, residues 98–137 (QRDKVISLLRVAHSDIQNLMHEADNREMELLVATQAYTRT) are cytoplasmic. Residues 138–158 (ITLLIWIPSVIAGLMAYSDCI) form a helical membrane-spanning segment. Over 159 to 196 (YRSLFLPKSVFNVPAVRRGEEHPILLFQLFPFGELCDN) the chain is Extracellular. The helical transmembrane segment at 197–217 (FVVGYLGPWYALGLGITAIPL) threads the bilayer. Residues 218 to 292 (WHTFITCLMK…FVQELQYLIC (75 aa)) are Cytoplasmic-facing. Residues 293–313 (VPVMADFIIFSVLICFLFFAL) form a helical membrane-spanning segment. Residues 314-323 (TVGVPSKMDY) are Extracellular-facing. Residues 324–344 (FFMFIYLFVMAGILWIYHWHA) form a helical membrane-spanning segment. Residues 345–389 (TLIVECHDELSLAYFSCGWYNFEMPLQKMLVFMMMHAQRPMKMRA) lie on the Cytoplasmic side of the membrane. Residues 390 to 410 (LLVDLNLRTFIDIGRGAYSYF) traverse the membrane as a helical segment. Residues 411-419 (NLLRSSHLY) are Extracellular-facing.

This sequence belongs to the insect chemoreceptor superfamily. Heteromeric odorant receptor channel (TC 1.A.69) family. Or30a subfamily. As to quaternary structure, interacts with Orco. Complexes exist early in the endomembrane system in olfactory sensory neurons (OSNs), coupling these complexes to the conserved ciliary trafficking pathway. As to expression, expressed in olfactory sensory neurons in the antenna.

Its subcellular location is the cell membrane. Functionally, odorant receptor which mediates acceptance or avoidance behavior, depending on its substrates. The odorant receptor repertoire encodes a large collection of odor stimuli that vary widely in identity, intensity, and duration. May form a complex with Orco to form odorant-sensing units, providing sensitive and prolonged odorant signaling and calcium permeability. Specific receptor for geosmin, a microbial odorant that constitutes an ecologically relevant stimulus that alerts flies to the presence of harmful microbes and induces avoidance behavior. This is Odorant receptor 56a (Or56a) from Drosophila melanogaster (Fruit fly).